The chain runs to 64 residues: Alpha-conotoxin GI (64 aa).

The signal sequence occupies residues 1–21 (MGMRMMFTVFLLVVLATTVVS). Residues 22 to 49 (FPSERASDGRDDTAKDEGSDMDKLVEKK) constitute a propeptide that is removed on maturation. 2 disulfide bridges follow: C51/C56 and C52/C62. Residue C62 is modified to Cysteine amide.

The protein belongs to the conotoxin A superfamily. In terms of processing, not hydroxylated; hydroxylation, on a synthetic hydroxylated GI, improves its folding but impairs its activity against target receptors. Expressed by the venom duct.

The protein resides in the secreted. Functionally, alpha-conotoxins act on postsynaptic membranes, they bind to the nicotinic acetylcholine receptors (nAChR) and thus inhibit them. Reversibly inhibits mammalian muscle nAChR (IC(50)=339 nM on adult subtype (alpha-1-beta-1-gamma-delta/CHRNA1-CHRNB1-CHRNG-CHRND) and IC(50)=5.86-995 nM on fetal subtype (alpha-1-beta-1-delta-epsilon/CHRNA1-CHRNB1-CHRND-CHRNE)). The higher affinity site is the alpha/delta site on mouse muscle-derived BC3H-1 receptor, and the other site (alpha/gamma site) on nicotinic receptors from Torpedo californica electric organ. The sequence is that of Alpha-conotoxin GI from Conus geographus (Geography cone).